A 473-amino-acid chain; its full sequence is ATP synthase subunit beta (473 aa).

Residue 153–160 participates in ATP binding; it reads GGAGVGKT.

The protein belongs to the ATPase alpha/beta chains family. F-type ATPases have 2 components, CF(1) - the catalytic core - and CF(0) - the membrane proton channel. CF(1) has five subunits: alpha(3), beta(3), gamma(1), delta(1), epsilon(1). CF(0) has three main subunits: a(1), b(2) and c(9-12). The alpha and beta chains form an alternating ring which encloses part of the gamma chain. CF(1) is attached to CF(0) by a central stalk formed by the gamma and epsilon chains, while a peripheral stalk is formed by the delta and b chains.

It is found in the cell inner membrane. The enzyme catalyses ATP + H2O + 4 H(+)(in) = ADP + phosphate + 5 H(+)(out). Produces ATP from ADP in the presence of a proton gradient across the membrane. The catalytic sites are hosted primarily by the beta subunits. The protein is ATP synthase subunit beta of Rickettsia massiliae (strain Mtu5).